The primary structure comprises 319 residues: Ribonucleoside-diphosphate reductase small chain (319 aa).

Asp-70, Glu-101, and His-104 together coordinate Fe cation. Tyr-108 is a catalytic residue. Residues Glu-163, Glu-197, and His-200 each coordinate Fe cation. The segment at 313-319 (FSLDVDF) is interaction with R1.

The protein belongs to the ribonucleoside diphosphate reductase small chain family. As to quaternary structure, interacts with RNR1/OPG080 subunit. Can interact with host RNR1 supunit. Requires Fe cation as cofactor.

It carries out the reaction a 2'-deoxyribonucleoside 5'-diphosphate + [thioredoxin]-disulfide + H2O = a ribonucleoside 5'-diphosphate + [thioredoxin]-dithiol. Its function is as follows. Ribonucleoside-diphosphate reductase holoenzyme provides the precursors necessary for viral DNA synthesis. Allows virus growth in non-dividing cells. Catalyzes the biosynthesis of deoxyribonucleotides from the corresponding ribonucleotides. This is Ribonucleoside-diphosphate reductase small chain (OPG048) from Bos taurus (Bovine).